We begin with the raw amino-acid sequence, 611 residues long: Putative clathrin assembly protein At4g02650 (611 aa).

Residues 26-162 form the ENTH domain; that stretch reads GRSSSLTELE…DYRMQGRRGK (137 aa). 2 disordered regions span residues 158 to 184 and 337 to 406; these read GRRG…HRGT and TTKS…GDLL. The span at 386 to 401 shows a compositional bias: basic and acidic residues; that stretch reads METKKDVEEVVSRQDQ.

Its subcellular location is the membrane. It is found in the clathrin-coated pit. It localises to the golgi apparatus. The protein resides in the cytoplasmic vesicle. The protein localises to the clathrin-coated vesicle. The protein is Putative clathrin assembly protein At4g02650 of Arabidopsis thaliana (Mouse-ear cress).